Reading from the N-terminus, the 2157-residue chain is Conidial yellow pigment biosynthesis polyketide synthase (2157 aa).

The segment at 8–244 (YLFGDQTGDF…VMVPIHGPFH (237 aa)) is N-terminal acylcarrier protein transacylase domain (SAT). The region spanning 376 to 807 (LSKIAIIGMS…GGNTALLLED (432 aa)) is the Ketosynthase family 3 (KS3) domain. Catalysis depends on for beta-ketoacyl synthase activity residues cysteine 548, histidine 683, and histidine 725. The segment at 912-1232 (FLFTGQGAQY…LSSLYLAGVD (321 aa)) is malonyl-CoA:ACP transacylase (MAT) domain. Catalysis depends on serine 1001, which acts as the For acyl/malonyl transferase activity. The segment at 1290-1603 (TTSAQRVVES…RKILDIALPP (314 aa)) is product template (PT) domain. The segment at 1294–1425 (QRVVESRDDG…CEVKLFDCMA (132 aa)) is N-terminal hotdog fold. Residues 1294–1598 (QRVVESRDDG…FQALSRKILD (305 aa)) form the PKS/mFAS DH domain. Histidine 1326 functions as the Proton acceptor; for dehydratase activity in the catalytic mechanism. The C-terminal hotdog fold stretch occupies residues 1453-1598 (AHRLRRGMVY…FQALSRKILD (146 aa)). Aspartate 1511 serves as the catalytic Proton donor; for dehydratase activity. The tract at residues 1607–1638 (SKAQTSPIQSSAPQKPIETAKPTSRPAPPVTM) is disordered. A compositionally biased stretch (polar residues) spans 1608–1619 (KAQTSPIQSSAP). A Carrier 1 domain is found at 1645 to 1722 (SAGPSVVVRA…DFKRFVTQLS (78 aa)). Residue serine 1682 is modified to O-(pantetheine 4'-phosphoryl)serine. Residues 1725–1760 (VASDSSSTDRESEYSFNGDSCSGLSSPASPGTVSPP) are disordered. Over residues 1741–1759 (NGDSCSGLSSPASPGTVSP) the composition is skewed to polar residues. The 78-residue stretch at 1767–1844 (IHENGTMKEI…QIETALDLKP (78 aa)) folds into the Carrier 2 domain. The residue at position 1804 (serine 1804) is an O-(pantetheine 4'-phosphoryl)serine. Residues 1847–1888 (VPTAVPQSQPITLPQSQSTKQLSTRPTSSSDNHPPATSILLQ) are disordered. Residues 1851–1878 (VPQSQPITLPQSQSTKQLSTRPTSSSDN) are compositionally biased toward polar residues. The claisen cyclase domain stretch occupies residues 1877–2149 (DNHPPATSIL…ELATFMKNAL (273 aa)). Residue serine 1967 is the For thioesterase activity of the active site.

Pantetheine 4'-phosphate serves as cofactor.

It carries out the reaction 6 malonyl-CoA + acetyl-CoA + 6 H(+) = naphtopyrone YWA1 + 6 CO2 + 7 CoA + H2O. Its pathway is polyketide biosynthesis; heptaketide naphthopyrone YWA1 biosynthesis. Its function is as follows. Non-reducing polyketide synthase that condenses acetate units to form a heptaketide naphthopyrene YWA1, a yellow pigment found in mature asexual spores (conidia), via a polyketomethylene intermediate step. This is Conidial yellow pigment biosynthesis polyketide synthase from Emericella nidulans (strain FGSC A4 / ATCC 38163 / CBS 112.46 / NRRL 194 / M139) (Aspergillus nidulans).